Reading from the N-terminus, the 369-residue chain is Beta-1,4-galactosyltransferase 2 (369 aa).

Over 1-15 the chain is Cytoplasmic; it reads MSRLLGGTLERVCKA. A helical; Signal-anchor for type II membrane protein membrane pass occupies residues 16 to 36; that stretch reads VLLLCLLHFLVAVILYFDVYA. At 37-369 the chain is on the lumenal side; sequence QHLAFFSRFS…GQPMSWLTQG (333 aa). Residues 58–73 are compositionally biased toward polar residues; sequence ASSSTNCSRPNATAAS. Positions 58–90 are disordered; the sequence is ASSSTNCSRPNATAASSGLPEVPSARPGPTAPV. Residues Asn63 and Asn68 are each glycosylated (N-linked (GlcNAc...) asparagine). An intrachain disulfide couples Cys94 to Cys136. Residues 147 to 151, 186 to 188, 214 to 215, and Trp275 contribute to the UDP-alpha-D-galactose site; these read PFRHR, FNR, and VD. A disulfide bridge links Cys208 with Cys227. Asp215 contributes to the Mn(2+) binding site. 277-280 contacts N-acetyl-D-glucosamine; the sequence is GEDD. Mn(2+) is bound at residue His308. A UDP-alpha-D-galactose-binding site is contributed by 308–310; sequence HDR. Arg320 contributes to the N-acetyl-D-glucosamine binding site. An N-linked (GlcNAc...) asparagine glycan is attached at Asn354.

It belongs to the glycosyltransferase 7 family. Mn(2+) is required as a cofactor.

It localises to the golgi apparatus. Its subcellular location is the golgi stack membrane. The catalysed reaction is D-glucose + UDP-alpha-D-galactose = lactose + UDP + H(+). It catalyses the reaction an N-acetyl-beta-D-glucosaminyl derivative + UDP-alpha-D-galactose = a beta-D-galactosyl-(1-&gt;4)-N-acetyl-beta-D-glucosaminyl derivative + UDP + H(+). The enzyme catalyses N-acetyl-D-glucosamine + UDP-alpha-D-galactose = beta-D-galactosyl-(1-&gt;4)-N-acetyl-D-glucosamine + UDP + H(+). It participates in protein modification; protein glycosylation. In terms of biological role, responsible for the synthesis of complex-type N-linked oligosaccharides in many glycoproteins as well as the carbohydrate moieties of glycolipids. Can produce lactose. The protein is Beta-1,4-galactosyltransferase 2 of Mus musculus (Mouse).